Here is a 136-residue protein sequence, read N- to C-terminus: Large ribosomal subunit protein eL27 (136 aa).

The region spanning 5-40 (MKPGKVVLVLAGRYSGRKAVIVKNIDDGTSDRPYSH) is the KOW domain. N6-acetyllysine occurs at positions 27 and 93.

This sequence belongs to the eukaryotic ribosomal protein eL27 family. In terms of assembly, component of the large ribosomal subunit. Interacts with RRP1B. Component of the large ribosomal subunit. Interacts with RRP1B. Interacts with DHX33.

The protein resides in the cytoplasm. It localises to the cytosol. It is found in the rough endoplasmic reticulum. Functionally, component of the large ribosomal subunit. Required for proper rRNA processing and maturation of 28S and 5.8S rRNAs. This chain is Large ribosomal subunit protein eL27 (RPL27), found in Canis lupus familiaris (Dog).